Here is a 445-residue protein sequence, read N- to C-terminus: Transcription activator AFTR-1 (445 aa).

A DNA-binding region (zn(2)-C6 fungal-type) is located at residues 17–44 (CDFCTQSKLRCNKNKPSCRRCTLQQQPC). The segment at 50–89 (RRTGRPPKHPRKANDCQEANGQHGDQDPVTSTPGGSYQQQ) is disordered. Residues 51–60 (RTGRPPKHPR) show a composition bias toward basic residues. The span at 77–89 (PVTSTPGGSYQQQ) shows a compositional bias: polar residues.

Its subcellular location is the nucleus. Its function is as follows. Transcription factor that regulates the expression of the gene clusters that mediate the biosynthesis of the host-selective toxins (HSTs) AF-toxins responsible for Alternaria black spot of strawberry disease by the strawberry pathotype. On cellular level, AF-toxins affect plasma membrane of susceptible cells and cause a sudden increase in loss of K(+) after a few minutes of toxin treatment. The protein is Transcription activator AFTR-1 of Alternaria alternata (Alternaria rot fungus).